The following is a 137-amino-acid chain: Ribosome-binding factor A (137 aa).

This sequence belongs to the RbfA family. As to quaternary structure, monomer. Binds 30S ribosomal subunits, but not 50S ribosomal subunits or 70S ribosomes.

It localises to the cytoplasm. Functionally, one of several proteins that assist in the late maturation steps of the functional core of the 30S ribosomal subunit. Associates with free 30S ribosomal subunits (but not with 30S subunits that are part of 70S ribosomes or polysomes). Required for efficient processing of 16S rRNA. May interact with the 5'-terminal helix region of 16S rRNA. The chain is Ribosome-binding factor A from Trichodesmium erythraeum (strain IMS101).